A 257-amino-acid chain; its full sequence is MIILAGLGLYDEKDTTLKTVEFAKKADKIYAEFYTAILTGTTIEKIEETLGKEITILDREKVELETEKLINESKDKDIMFLTAGDPMVATTHIDIAIEAKKKGIEVIILNAPSIYSAIGITGLQLYKFGKTTSIVFPEPNYFPETPYDVIKENSKMGYHTLCLLDIQAHNTRFMTANEGLEVLLKIEEKRNENILNKDTKVVVVARAGSLKPKMVYGKIGDLLEYDFGAPLHCIIFTGNLHFMEEDALKYLCENISE.

S-adenosyl-L-methionine contacts are provided by residues leucine 9, aspartate 85, valine 88, 113-114 (SI), leucine 164, alanine 207, and histidine 232.

Belongs to the diphthine synthase family. In terms of assembly, homodimer.

It carries out the reaction 2-[(3S)-amino-3-carboxypropyl]-L-histidyl-[translation elongation factor 2] + 3 S-adenosyl-L-methionine = diphthine-[translation elongation factor 2] + 3 S-adenosyl-L-homocysteine + 3 H(+). It functions in the pathway protein modification; peptidyl-diphthamide biosynthesis. Functionally, S-adenosyl-L-methionine-dependent methyltransferase that catalyzes the trimethylation of the amino group of the modified target histidine residue in translation elongation factor 2 (EF-2), to form an intermediate called diphthine. The three successive methylation reactions represent the second step of diphthamide biosynthesis. This is Diphthine synthase from Methanococcus aeolicus (strain ATCC BAA-1280 / DSM 17508 / OCM 812 / Nankai-3).